A 263-amino-acid chain; its full sequence is uncharacterized protein (263 aa).

Positions 72–168 (LDKKETKELS…RTIVEIRNTK (97 aa)) form a coiled coil. The disordered stretch occupies residues 76–158 (ETKELSKKEK…EKKEKKEKED (83 aa)). Basic residues predominate over residues 83 to 95 (KEKKQLKKEKKAL). A compositionally biased stretch (basic and acidic residues) spans 96 to 107 (KKENKGGKDKKD). Residues 108-121 (KKDKKDKKDKKDKK) are compositionally biased toward basic residues. 2 stretches are compositionally biased toward basic and acidic residues: residues 122 to 131 (DKKDKGDKKD) and 139 to 158 (KHDD…EKED).

This is an uncharacterized protein from Dictyostelium discoideum (Social amoeba).